Reading from the N-terminus, the 160-residue chain is Transcription antitermination protein NusB (160 aa).

Belongs to the NusB family.

Involved in transcription antitermination. Required for transcription of ribosomal RNA (rRNA) genes. Binds specifically to the boxA antiterminator sequence of the ribosomal RNA (rrn) operons. The chain is Transcription antitermination protein NusB from Salinibacter ruber (strain DSM 13855 / M31).